Reading from the N-terminus, the 312-residue chain is Malate dehydrogenase (312 aa).

NAD(+)-binding positions include 7 to 13 (GAAGGIG) and Asp34. Arg81 and Arg87 together coordinate substrate. NAD(+) contacts are provided by residues Asn94 and 117-119 (ITN). Positions 119 and 153 each coordinate substrate. The active-site Proton acceptor is the His177. Met227 is an NAD(+) binding site.

The protein belongs to the LDH/MDH superfamily. MDH type 1 family. In terms of assembly, homodimer.

The catalysed reaction is (S)-malate + NAD(+) = oxaloacetate + NADH + H(+). In terms of biological role, catalyzes the reversible oxidation of malate to oxaloacetate. In Yersinia pseudotuberculosis serotype O:1b (strain IP 31758), this protein is Malate dehydrogenase.